Reading from the N-terminus, the 146-residue chain is Large ribosomal subunit protein uL11 (146 aa).

The protein belongs to the universal ribosomal protein uL11 family. As to quaternary structure, part of the ribosomal stalk of the 50S ribosomal subunit. Interacts with L10 and the large rRNA to form the base of the stalk. L10 forms an elongated spine to which L12 dimers bind in a sequential fashion forming a multimeric L10(L12)X complex. Post-translationally, one or more lysine residues are methylated.

Forms part of the ribosomal stalk which helps the ribosome interact with GTP-bound translation factors. The polypeptide is Large ribosomal subunit protein uL11 (Corynebacterium jeikeium (strain K411)).